A 273-amino-acid polypeptide reads, in one-letter code: Bidirectional sugar transporter SWEET1a (273 aa).

Residues 1-6 (MEHIAR) are Extracellular-facing. The chain crosses the membrane as a helical span at residues 7-27 (FFFGVSGNVIALFLFLSPVVT). The MtN3/slv 1 domain occupies 7–95 (FFFGVSGNVI…VIFLIFAERK (89 aa)). The Cytoplasmic segment spans residues 28–42 (FWRIIKKRSTEDFSG). The helical transmembrane segment at 43–63 (VPYNMTLLNCLLSAWYGLPFV) threads the bilayer. The Extracellular segment spans residues 64–71 (SPNNILVT). A helical membrane pass occupies residues 72–92 (TINGTGSVIEAIYVVIFLIFA). Topologically, residues 93-101 (ERKARLKMM) are cytoplasmic. Residues 102–122 (GLLGLVTSIFTMVVLVSLLAL) form a helical membrane-spanning segment. Topologically, residues 123 to 128 (HGQGRK) are extracellular. A helical transmembrane segment spans residues 129-149 (LFCGLAATIFSICMYASPLSI). Residues 131–214 (CGLAATIFSI…ILYAIYRNHK (84 aa)) form the MtN3/slv 2 domain. The Cytoplasmic portion of the chain corresponds to 150-163 (MRLVIKTKSVEFMP). A helical membrane pass occupies residues 164–184 (FLLSLSVFLCGTSWFIYGLLG). Topologically, residues 185 to 188 (RDPF) are extracellular. Residues 189 to 209 (IAIPNGCGSFLGLMQLILYAI) traverse the membrane as a helical segment. The Cytoplasmic segment spans residues 210–273 (YRNHKGATPA…SADDKVASQV (64 aa)).

The protein belongs to the SWEET sugar transporter family. Forms homooligomers and/or heterooligomers.

It localises to the cell membrane. Its function is as follows. Mediates both low-affinity uptake and efflux of sugar across the plasma membrane. The polypeptide is Bidirectional sugar transporter SWEET1a (SWEET1A) (Oryza sativa subsp. japonica (Rice)).